The chain runs to 339 residues: Deubiquitinase and deneddylase Dub2 (339 aa).

Residues 36-56 form a helical membrane-spanning segment; the sequence is IIIALFLIVISCGLILCAYTF. Active-site residues include histidine 203, aspartate 220, and cysteine 282.

The protein belongs to the peptidase C48 family.

It is found in the secreted. The protein resides in the host cell. It localises to the membrane. In terms of biological role, effector proteins function to alter host cell physiology and promote bacterial survival in host tissues. This protease possesses deubiquitinating and deneddylating activities. The protein is Deubiquitinase and deneddylase Dub2 (cdu2) of Chlamydia trachomatis serovar L2 (strain ATCC VR-902B / DSM 19102 / 434/Bu).